We begin with the raw amino-acid sequence, 186 residues long: Ribosome-recycling factor (186 aa).

Belongs to the RRF family.

The protein resides in the cytoplasm. Responsible for the release of ribosomes from messenger RNA at the termination of protein biosynthesis. May increase the efficiency of translation by recycling ribosomes from one round of translation to another. The sequence is that of Ribosome-recycling factor from Burkholderia thailandensis (strain ATCC 700388 / DSM 13276 / CCUG 48851 / CIP 106301 / E264).